The following is a 37-amino-acid chain: Large ribosomal subunit protein bL36c (37 aa).

This sequence belongs to the bacterial ribosomal protein bL36 family.

It localises to the plastid. The protein localises to the chloroplast. This chain is Large ribosomal subunit protein bL36c, found in Pinus koraiensis (Korean pine).